A 338-amino-acid chain; its full sequence is Glutaminase (338 aa).

The substrate site is built by serine 80, asparagine 130, glutamate 174, asparagine 181, tyrosine 205, tyrosine 257, and valine 275.

Belongs to the glutaminase family. As to quaternary structure, homotetramer.

The catalysed reaction is L-glutamine + H2O = L-glutamate + NH4(+). This chain is Glutaminase, found in Microcystis aeruginosa (strain NIES-843 / IAM M-2473).